The primary structure comprises 108 residues: T-cell acute lymphocytic leukemia protein 2 homolog (108 aa).

A bHLH domain is found at 2-54 (TRKIFTNTRERWRQQSVNNAFAKLRKLIPTHPPDKKLSKNETLRLAMRYINFL). Residues 76–108 (GLFPPKTRLPDEDDRTLLNDYRVPSPGPSHGAP) form a disordered region.

This Mus musculus (Mouse) protein is T-cell acute lymphocytic leukemia protein 2 homolog (Tal2).